A 339-amino-acid polypeptide reads, in one-letter code: NADPH dehydrogenase (339 aa).

21 to 24 (PPMC) contributes to the FMN binding site. A substrate-binding site is contributed by Tyr-26. 2 residues coordinate FMN: Ala-57 and Gln-99. 162–165 (HGAH) contacts substrate. Residues Arg-215 and 307-308 (GR) each bind FMN.

Belongs to the NADH:flavin oxidoreductase/NADH oxidase family. NamA subfamily. Homotetramer. FMN serves as cofactor.

It carries out the reaction A + NADPH + H(+) = AH2 + NADP(+). Its function is as follows. Catalyzes the reduction of the double bond of an array of alpha,beta-unsaturated aldehydes and ketones. It also reduces the nitro group of nitroester and nitroaromatic compounds. It could have a role in detoxification processes. This is NADPH dehydrogenase from Clostridium acetobutylicum (strain ATCC 824 / DSM 792 / JCM 1419 / IAM 19013 / LMG 5710 / NBRC 13948 / NRRL B-527 / VKM B-1787 / 2291 / W).